The sequence spans 177 residues: Putative HVA22-like protein g (177 aa).

The segment at 145–165 is disordered; the sequence is QSTPKSKAEEKKETTIPKLDD. Over residues 150-165 the composition is skewed to basic and acidic residues; the sequence is SKAEEKKETTIPKLDD.

The protein belongs to the DP1 family.

This chain is Putative HVA22-like protein g (HVA22G), found in Arabidopsis thaliana (Mouse-ear cress).